Reading from the N-terminus, the 448-residue chain is Methylenetetrahydrofolate--tRNA-(uracil-5-)-methyltransferase TrmFO (448 aa).

Residue 13 to 18 (GAGLAG) participates in FAD binding.

Belongs to the MnmG family. TrmFO subfamily. The cofactor is FAD.

Its subcellular location is the cytoplasm. The enzyme catalyses uridine(54) in tRNA + (6R)-5,10-methylene-5,6,7,8-tetrahydrofolate + NADH + H(+) = 5-methyluridine(54) in tRNA + (6S)-5,6,7,8-tetrahydrofolate + NAD(+). It carries out the reaction uridine(54) in tRNA + (6R)-5,10-methylene-5,6,7,8-tetrahydrofolate + NADPH + H(+) = 5-methyluridine(54) in tRNA + (6S)-5,6,7,8-tetrahydrofolate + NADP(+). Its function is as follows. Catalyzes the folate-dependent formation of 5-methyl-uridine at position 54 (M-5-U54) in all tRNAs. This Streptococcus pyogenes serotype M18 (strain MGAS8232) protein is Methylenetetrahydrofolate--tRNA-(uracil-5-)-methyltransferase TrmFO.